The following is a 520-amino-acid chain: Cytosol aminopeptidase (520 aa).

L200, M201, K280, and D285 together coordinate Zn(2+). Residues K280, D285, S290, and K292 each contribute to the substrate site. D285 lines the Mg(2+) pocket. Residue K292 is part of the active site. Positions 301, 303, 362, and 364 each coordinate Zn(2+). 2 residues coordinate substrate: D303 and D362. Positions 362 and 364 each coordinate Mg(2+). Residue R366 is part of the active site.

Belongs to the peptidase M17 family. In terms of assembly, homohexamer. Zn(2+) is required as a cofactor. It depends on Mn(2+) as a cofactor.

Its subcellular location is the cytoplasm. It catalyses the reaction Release of an N-terminal amino acid, Xaa-|-Yaa-, in which Xaa is preferably Leu, but may be other amino acids including Pro although not Arg or Lys, and Yaa may be Pro. Amino acid amides and methyl esters are also readily hydrolyzed, but rates on arylamides are exceedingly low.. It carries out the reaction an S-substituted L-cysteinylglycine + H2O = an S-substituted L-cysteine + glycine. The enzyme catalyses L-cysteinylglycine + H2O = L-cysteine + glycine. The catalysed reaction is S-benzyl-L-cysteinylglycine + H2O = S-benzyl-L-cysteine + glycine. It catalyses the reaction Release of N-terminal proline from a peptide.. Cytosolic metallopeptidase that catalyzes the removal of unsubstituted N-terminal hydrophobic amino acids from various peptides. The presence of Zn(2+) ions is essential for the peptidase activity, and the association with other cofactors can modulate the substrate spectificity of the enzyme. For instance, in the presence of Mn(2+), it displays a specific Cys-Gly hydrolyzing activity of Cys-Gly-S-conjugates. Involved in the metabolism of glutathione and in the degradation of glutathione S-conjugates, which may play a role in the control of the cell redox status. The chain is Cytosol aminopeptidase (lap3) from Xenopus tropicalis (Western clawed frog).